The sequence spans 985 residues: Guanine nucleotide exchange protein smcr8b (985 aa).

A uDENN FLCN/SMCR8-type domain is found at 47–225; sequence ISSAKLKKDF…VKCSSEREPI (179 aa). Over residues 242-292 the composition is skewed to basic and acidic residues; it reads NEKSSHTDEISPQEKDGCGNSRKVEVKLENENRSHFEHEQYGKQRKDKPDK. 3 disordered regions span residues 242–301, 502–528, and 639–659; these read NEKS…PLAN, QSQV…SPAE, and EESP…EDNN. One can recognise a cDENN FLCN/SMCR8-type domain in the interval 390 to 895; the sequence is RLKTLEELCD…LINLLVEPKS (506 aa). The segment covering 502 to 514 has biased composition (polar residues); it reads QSQVQHSTLNTPS. The dDENN FLCN/SMCR8-type domain occupies 904 to 962; it reads FTFAQSVQSKLVTKAFLLTFSHGHPSPSRPQGSSGTECFLSELHTDDKKILRYLSELIK.

The protein belongs to the SMCR8 family. In terms of assembly, component of the C9orf72-SMCR8 complex. The C9orf72-SMCR8 complex associates with the ATG1/ULK1 kinase complex.

It is found in the cytoplasm. Its subcellular location is the nucleus. In terms of biological role, component of the C9orf72-SMCR8 complex, a complex that has guanine nucleotide exchange factor (GEF) activity and regulates autophagy. In the complex, C9orf72 and SMCR8 probably constitute the catalytic subunits that promote the exchange of GDP to GTP, converting inactive GDP-bound RAB8A and RAB39B into their active GTP-bound form, thereby promoting autophagosome maturation. The C9orf72-SMCR8 complex also acts as a negative regulator of autophagy initiation by interacting with the ATG1/ULK1 kinase complex and inhibiting its protein kinase activity. This chain is Guanine nucleotide exchange protein smcr8b (smcr8b), found in Danio rerio (Zebrafish).